Consider the following 205-residue polypeptide: Proteasome subunit beta type-3 (205 aa).

Belongs to the peptidase T1B family. The 26S proteasome consists of a 20S proteasome core and two 19S regulatory subunits. The 20S proteasome core is composed of 28 subunits that are arranged in four stacked rings, resulting in a barrel-shaped structure. The two end rings are each formed by seven alpha subunits, and the two central rings are each formed by seven beta subunits. The catalytic chamber with the active sites is on the inside of the barrel.

Its subcellular location is the cytoplasm. The protein resides in the nucleus. Functionally, non-catalytic component of the proteasome, a multicatalytic proteinase complex which is characterized by its ability to cleave peptides with Arg, Phe, Tyr, Leu, and Glu adjacent to the leaving group at neutral or slightly basic pH. The proteasome has an ATP-dependent proteolytic activity. This chain is Proteasome subunit beta type-3, found in Drosophila melanogaster (Fruit fly).